The chain runs to 414 residues: Phospholipase A1-IIbeta (414 aa).

Residue K19 forms a Glycyl lysine isopeptide (Lys-Gly) (interchain with G-Cter in ubiquitin) linkage. Residues 191-217 are a coiled coil; it reads DKTSAQEQVQEELKRLLELYKNEDVTI. S223 functions as the Acyl-ester intermediate in the catalytic mechanism. Residues S223, D289, and H326 each act as charge relay system in the active site. Residues 386-414 form a disordered region; the sequence is DGTWKLNGDRSKKKQEEEDEKEENNCKFP. Positions 390 to 410 form a coiled coil; that stretch reads KLNGDRSKKKQEEEDEKEENN. A compositionally biased stretch (basic and acidic residues) spans 392–401; that stretch reads NGDRSKKKQE.

Belongs to the AB hydrolase superfamily. Lipase family.

It is found in the cytoplasm. Acylhydrolase that catalyzes the hydrolysis of phospholipids at the sn-1 position. The polypeptide is Phospholipase A1-IIbeta (Arabidopsis thaliana (Mouse-ear cress)).